The following is a 1172-amino-acid chain: Lysylphosphatidylglycerol biosynthesis bifunctional protein LysX (1172 aa).

The interval 1 to 34 is disordered; that stretch reads MGLHLTVPGLRRDGRGVQSNSHDTSSKTTADISR. The interval 1-663 is phosphatidylglycerol lysyltransferase; the sequence is MGLHLTVPGL…LLHHDGSAPD (663 aa). The span at 17–31 shows a compositional bias: polar residues; that stretch reads VQSNSHDTSSKTTAD. 7 consecutive transmembrane segments (helical) span residues 80–100, 122–142, 146–166, 177–197, 214–234, 272–292, and 612–632; these read VPAAAGWTVGVIATLSLLASV, FPDTNFAWSFVLALLAAALTA, IAWLVLLANMVLAAVVNAAEI, FGENLGFAVHVVAIVVLVLGY, AVWLAGAVVGIVASWGLVELF, AIFGLFGAFALIGAAIVLFLS, and VIPRVGVASVIAEGFLVLPFS. Positions 664–1172 are lysine--tRNA ligase; that stretch reads VSGLRQVGLT…TLPFPLAKPH (509 aa). Positions 726-804 form a DNA-binding region, OB; the sequence is VSVSGRIMRI…SLIVSGWRLI (79 aa). Residues D1084 and E1091 each coordinate Mg(2+).

In the N-terminal section; belongs to the LPG synthetase family. This sequence in the C-terminal section; belongs to the class-II aminoacyl-tRNA synthetase family. Mg(2+) serves as cofactor.

The protein localises to the cell membrane. It carries out the reaction tRNA(Lys) + L-lysine + ATP = L-lysyl-tRNA(Lys) + AMP + diphosphate. The enzyme catalyses L-lysyl-tRNA(Lys) + a 1,2-diacyl-sn-glycero-3-phospho-(1'-sn-glycerol) = a 1,2-diacyl-sn-glycero-3-phospho-1'-(3'-O-L-lysyl)-sn-glycerol + tRNA(Lys). Functionally, catalyzes the production of L-lysyl-tRNA(Lys)transfer and the transfer of a lysyl group from L-lysyl-tRNA(Lys) to membrane-bound phosphatidylglycerol (PG), which produces lysylphosphatidylglycerol (LPG), one of the components of the bacterial membrane with a positive net charge. LPG synthesis contributes to the resistance to cationic antimicrobial peptides (CAMPs) and likely protects M.tuberculosis against the CAMPs produced by competiting microorganisms (bacteriocins). In fact, the modification of anionic phosphatidylglycerol with positively charged L-lysine results in repulsion of the peptides. This chain is Lysylphosphatidylglycerol biosynthesis bifunctional protein LysX (lysX), found in Mycobacterium bovis (strain BCG / Pasteur 1173P2).